The sequence spans 162 residues: NADH-quinone oxidoreductase subunit I (162 aa).

4Fe-4S ferredoxin-type domains follow at residues 53-83 (LRRY…IEAE) and 93-122 (TRYD…ETRI). Positions 63, 66, 69, 73, 102, 105, 108, and 112 each coordinate [4Fe-4S] cluster.

This sequence belongs to the complex I 23 kDa subunit family. In terms of assembly, NDH-1 is composed of 14 different subunits. Subunits NuoA, H, J, K, L, M, N constitute the membrane sector of the complex. [4Fe-4S] cluster is required as a cofactor.

The protein resides in the cell inner membrane. It catalyses the reaction a quinone + NADH + 5 H(+)(in) = a quinol + NAD(+) + 4 H(+)(out). Functionally, NDH-1 shuttles electrons from NADH, via FMN and iron-sulfur (Fe-S) centers, to quinones in the respiratory chain. The immediate electron acceptor for the enzyme in this species is believed to be ubiquinone. Couples the redox reaction to proton translocation (for every two electrons transferred, four hydrogen ions are translocated across the cytoplasmic membrane), and thus conserves the redox energy in a proton gradient. The protein is NADH-quinone oxidoreductase subunit I of Dechloromonas aromatica (strain RCB).